The primary structure comprises 223 residues: MFAVIKTGGKQYRVAAGDEIRIEKLEGAAGDTLDLGDVLMLGSEAGVTVGSPTIDGAQVIGELLDTNRARKIIVFKKRRRQNYRRTKGHRQWGTVVRIAEIVAPGEKAKTALKSTTAEPKAADAPKAKAKAAPKAEKAAAPKAEKAPAKKAAAPKAAAADALTELTGVGPALATKLNEAGITTFAQVAAWTEADLDALSETITGLKAKAEKNDWINAAKALAK.

Residues 110-149 are disordered; the sequence is TALKSTTAEPKAADAPKAKAKAAPKAEKAAAPKAEKAPAK. The segment covering 133 to 147 has biased composition (basic and acidic residues); it reads PKAEKAAAPKAEKAP.

It belongs to the bacterial ribosomal protein bL21 family. In terms of assembly, part of the 50S ribosomal subunit. Contacts protein L20.

In terms of biological role, this protein binds to 23S rRNA in the presence of protein L20. The chain is Large ribosomal subunit protein bL21 from Maricaulis maris (strain MCS10) (Caulobacter maris).